The following is a 345-amino-acid chain: NADPH-dependent oxidoreductase 2-alkenal reductase (345 aa).

Residues 52 to 53 (PY), 163 to 169 (AASGAVG), G188, K192, Y208, N232, C254, Y260, 284 to 286 (FVV), F330, and 334 to 336 (NVG) each bind NADP(+). Y53 is a substrate binding site. Y260 is a substrate binding site.

Belongs to the NADP-dependent oxidoreductase L4BD family. As to quaternary structure, homodimer. Expressed in leaves.

It localises to the cytoplasm. Its subcellular location is the nucleus. It is found in the nucleoplasm. The enzyme catalyses an n-alkanal + NAD(+) = an alk-2-enal + NADH + H(+). It catalyses the reaction an n-alkanal + NADP(+) = an alk-2-enal + NADPH + H(+). Its activity is regulated as follows. Inhibited by N-ethylmaleimide and p-chloromercuribenzoic acid. Functionally, involved in the detoxification of reactive carbonyls. Acts on lipid peroxide-derived reactive aldehydes. Specific to a double bond activated by an adjacent carbonyl group. Can use both quinones and diamide as substrates, but not menadione, ferricyanide or phylloquinone. Can use 4-hydroxy-(2E)-nonenal (HNE), 4-hydroxy-(2E)-hexenal (HHE), (2E)-nonenal, (2E)-hexenal, (2E)-pentenal, propenal (acrolein), 3-buten-2-one and 3-penten-2-one, but not (R)-(-)-carvone, n-nonanal, n-hexanal, (3Z)-hexanal, cyclohex-2-en-1-one or 12-oxo phytodienoic acid (OPDA) as electron acceptors. Catalyzes the reduction of the alpha,beta-unsaturated bond of 2-alkenals, of lipid peroxide-derived oxenes 9-oxo-10(E),12(Z)-octadecadienoic acid (9-KODE) and 13-oxo-9(Z),11(E)-octadecadienoic acid (13-KODE), as well as 4-oxo-(2E)-nonenal and 4-hydroxynonenal. Can use 12-oxo-10(E) dodecanoate (traumatin), trans-1,3 diphenyl-2-propenone, trans-1,4-diphenyl-2-butene-1,4-dione, 9-oxo-12,13-epoxy-(10E)-octadecenoic acid (trans-EKODE-1b) and 9,13-dihydroxy-10-oxo-11-octadecenoic acid as substrates. Catalyzes the reduction of the 7-8 double bond of phenylpropanal substrates, such as p-coumaryl aldehyde and coniferyl aldehyde (in vitro). Has activity towards toxic substrates, such as 4-hydroxy-(2E)-nonenal (in vitro). May play a distinct role in plant antioxidant defense and is possibly involved in NAD(P)/NAD(P)H homeostasis. The polypeptide is NADPH-dependent oxidoreductase 2-alkenal reductase (Arabidopsis thaliana (Mouse-ear cress)).